Reading from the N-terminus, the 381-residue chain is Lipid-A-disaccharide synthase (381 aa).

This sequence belongs to the LpxB family.

The catalysed reaction is a lipid X + a UDP-2-N,3-O-bis[(3R)-3-hydroxyacyl]-alpha-D-glucosamine = a lipid A disaccharide + UDP + H(+). It functions in the pathway bacterial outer membrane biogenesis; LPS lipid A biosynthesis. Condensation of UDP-2,3-diacylglucosamine and 2,3-diacylglucosamine-1-phosphate to form lipid A disaccharide, a precursor of lipid A, a phosphorylated glycolipid that anchors the lipopolysaccharide to the outer membrane of the cell. This is Lipid-A-disaccharide synthase from Rickettsia bellii (strain OSU 85-389).